The primary structure comprises 350 residues: Biotin synthase (350 aa).

The region spanning 38–256 (NYVQVSTLLS…IAIARIMMPQ (219 aa)) is the Radical SAM core domain. Positions 53, 57, and 60 each coordinate [4Fe-4S] cluster. Residues C97, C128, C188, and R260 each coordinate [2Fe-2S] cluster.

The protein belongs to the radical SAM superfamily. Biotin synthase family. As to quaternary structure, homodimer. [4Fe-4S] cluster is required as a cofactor. It depends on [2Fe-2S] cluster as a cofactor.

It carries out the reaction (4R,5S)-dethiobiotin + (sulfur carrier)-SH + 2 reduced [2Fe-2S]-[ferredoxin] + 2 S-adenosyl-L-methionine = (sulfur carrier)-H + biotin + 2 5'-deoxyadenosine + 2 L-methionine + 2 oxidized [2Fe-2S]-[ferredoxin]. Its pathway is cofactor biosynthesis; biotin biosynthesis; biotin from 7,8-diaminononanoate: step 2/2. Its function is as follows. Catalyzes the conversion of dethiobiotin (DTB) to biotin by the insertion of a sulfur atom into dethiobiotin via a radical-based mechanism. This Vibrio campbellii (strain ATCC BAA-1116) protein is Biotin synthase.